We begin with the raw amino-acid sequence, 693 residues long: Elongation factor G (693 aa).

A tr-type G domain is found at 8–282; it reads EKTRNIGIMA…AVVDYLPSPL (275 aa). Residues 17 to 24, 81 to 85, and 135 to 138 contribute to the GTP site; these read AHVDAGKT, DTPGH, and NKMD.

The protein belongs to the TRAFAC class translation factor GTPase superfamily. Classic translation factor GTPase family. EF-G/EF-2 subfamily.

The protein localises to the cytoplasm. Catalyzes the GTP-dependent ribosomal translocation step during translation elongation. During this step, the ribosome changes from the pre-translocational (PRE) to the post-translocational (POST) state as the newly formed A-site-bound peptidyl-tRNA and P-site-bound deacylated tRNA move to the P and E sites, respectively. Catalyzes the coordinated movement of the two tRNA molecules, the mRNA and conformational changes in the ribosome. The polypeptide is Elongation factor G (Streptococcus mutans serotype c (strain ATCC 700610 / UA159)).